Reading from the N-terminus, the 336-residue chain is Holliday junction branch migration complex subunit RuvB (336 aa).

The interval 4–184 (ADRLISAGAT…FGIVQRLEFY (181 aa)) is large ATPase domain (RuvB-L). ATP contacts are provided by residues isoleucine 23, arginine 24, glycine 65, lysine 68, threonine 69, threonine 70, 131-133 (EDY), arginine 174, tyrosine 184, and arginine 221. Threonine 69 contributes to the Mg(2+) binding site. Residues 185 to 255 (QVPDLQHIVG…IAAQALDMLN (71 aa)) form a small ATPAse domain (RuvB-S) region. The tract at residues 258-336 (AEGFDYMDRK…HFGITPPEMP (79 aa)) is head domain (RuvB-H). Residues arginine 294, arginine 313, and arginine 318 each contribute to the DNA site.

Belongs to the RuvB family. In terms of assembly, homohexamer. Forms an RuvA(8)-RuvB(12)-Holliday junction (HJ) complex. HJ DNA is sandwiched between 2 RuvA tetramers; dsDNA enters through RuvA and exits via RuvB. An RuvB hexamer assembles on each DNA strand where it exits the tetramer. Each RuvB hexamer is contacted by two RuvA subunits (via domain III) on 2 adjacent RuvB subunits; this complex drives branch migration. In the full resolvosome a probable DNA-RuvA(4)-RuvB(12)-RuvC(2) complex forms which resolves the HJ.

It localises to the cytoplasm. It carries out the reaction ATP + H2O = ADP + phosphate + H(+). In terms of biological role, the RuvA-RuvB-RuvC complex processes Holliday junction (HJ) DNA during genetic recombination and DNA repair, while the RuvA-RuvB complex plays an important role in the rescue of blocked DNA replication forks via replication fork reversal (RFR). RuvA specifically binds to HJ cruciform DNA, conferring on it an open structure. The RuvB hexamer acts as an ATP-dependent pump, pulling dsDNA into and through the RuvAB complex. RuvB forms 2 homohexamers on either side of HJ DNA bound by 1 or 2 RuvA tetramers; 4 subunits per hexamer contact DNA at a time. Coordinated motions by a converter formed by DNA-disengaged RuvB subunits stimulates ATP hydrolysis and nucleotide exchange. Immobilization of the converter enables RuvB to convert the ATP-contained energy into a lever motion, pulling 2 nucleotides of DNA out of the RuvA tetramer per ATP hydrolyzed, thus driving DNA branch migration. The RuvB motors rotate together with the DNA substrate, which together with the progressing nucleotide cycle form the mechanistic basis for DNA recombination by continuous HJ branch migration. Branch migration allows RuvC to scan DNA until it finds its consensus sequence, where it cleaves and resolves cruciform DNA. The protein is Holliday junction branch migration complex subunit RuvB of Salmonella agona (strain SL483).